A 293-amino-acid polypeptide reads, in one-letter code: Acetyl-coenzyme A carboxylase carboxyl transferase subunit beta (293 aa).

Positions 29 to 293 (LWVKCSECSQ…GVNELVEANI (265 aa)) constitute a CoA carboxyltransferase N-terminal domain. Residues cysteine 33, cysteine 36, cysteine 52, and cysteine 55 each coordinate Zn(2+). A C4-type zinc finger spans residues 33–55 (CSECSQVAYRKDLISNFNVCSNC).

It belongs to the AccD/PCCB family. In terms of assembly, acetyl-CoA carboxylase is a heterohexamer composed of biotin carboxyl carrier protein (AccB), biotin carboxylase (AccC) and two subunits each of ACCase subunit alpha (AccA) and ACCase subunit beta (AccD). The cofactor is Zn(2+).

It localises to the cytoplasm. It catalyses the reaction N(6)-carboxybiotinyl-L-lysyl-[protein] + acetyl-CoA = N(6)-biotinyl-L-lysyl-[protein] + malonyl-CoA. Its pathway is lipid metabolism; malonyl-CoA biosynthesis; malonyl-CoA from acetyl-CoA: step 1/1. Component of the acetyl coenzyme A carboxylase (ACC) complex. Biotin carboxylase (BC) catalyzes the carboxylation of biotin on its carrier protein (BCCP) and then the CO(2) group is transferred by the transcarboxylase to acetyl-CoA to form malonyl-CoA. In Prochlorococcus marinus (strain MIT 9215), this protein is Acetyl-coenzyme A carboxylase carboxyl transferase subunit beta.